The primary structure comprises 204 residues: Large ribosomal subunit protein uL4 (204 aa).

The segment covering 42 to 52 (GTKAQKSRSQV) has biased composition (polar residues). The segment at 42-70 (GTKAQKSRSQVSGTTKKSKKQKGGGARHG) is disordered.

This sequence belongs to the universal ribosomal protein uL4 family. Part of the 50S ribosomal subunit.

In terms of biological role, one of the primary rRNA binding proteins, this protein initially binds near the 5'-end of the 23S rRNA. It is important during the early stages of 50S assembly. It makes multiple contacts with different domains of the 23S rRNA in the assembled 50S subunit and ribosome. Forms part of the polypeptide exit tunnel. The polypeptide is Large ribosomal subunit protein uL4 (Xylella fastidiosa (strain M12)).